The primary structure comprises 553 residues: Dihydroxy-acid dehydratase 1 (553 aa).

Asp-78 serves as a coordination point for Mg(2+). [2Fe-2S] cluster is bound at residue Cys-119. Residues Asp-120 and Lys-121 each coordinate Mg(2+). Position 121 is an N6-carboxylysine (Lys-121). Cys-191 is a [2Fe-2S] cluster binding site. A Mg(2+)-binding site is contributed by Glu-444. Ser-470 serves as the catalytic Proton acceptor.

Belongs to the IlvD/Edd family. As to quaternary structure, homodimer. The cofactor is [2Fe-2S] cluster. Requires Mg(2+) as cofactor.

The catalysed reaction is (2R)-2,3-dihydroxy-3-methylbutanoate = 3-methyl-2-oxobutanoate + H2O. It carries out the reaction (2R,3R)-2,3-dihydroxy-3-methylpentanoate = (S)-3-methyl-2-oxopentanoate + H2O. It functions in the pathway amino-acid biosynthesis; L-isoleucine biosynthesis; L-isoleucine from 2-oxobutanoate: step 3/4. Its pathway is amino-acid biosynthesis; L-valine biosynthesis; L-valine from pyruvate: step 3/4. In terms of biological role, functions in the biosynthesis of branched-chain amino acids. Catalyzes the dehydration of (2R,3R)-2,3-dihydroxy-3-methylpentanoate (2,3-dihydroxy-3-methylvalerate) into 2-oxo-3-methylpentanoate (2-oxo-3-methylvalerate) and of (2R)-2,3-dihydroxy-3-methylbutanoate (2,3-dihydroxyisovalerate) into 2-oxo-3-methylbutanoate (2-oxoisovalerate), the penultimate precursor to L-isoleucine and L-valine, respectively. This Methanosarcina acetivorans (strain ATCC 35395 / DSM 2834 / JCM 12185 / C2A) protein is Dihydroxy-acid dehydratase 1.